The sequence spans 1372 residues: DNA-directed RNA polymerase subunit beta (1372 aa).

Belongs to the RNA polymerase beta chain family. The RNAP catalytic core consists of 2 alpha, 1 beta, 1 beta' and 1 omega subunit. When a sigma factor is associated with the core the holoenzyme is formed, which can initiate transcription.

It catalyses the reaction RNA(n) + a ribonucleoside 5'-triphosphate = RNA(n+1) + diphosphate. Its function is as follows. DNA-dependent RNA polymerase catalyzes the transcription of DNA into RNA using the four ribonucleoside triphosphates as substrates. The protein is DNA-directed RNA polymerase subunit beta of Rickettsia bellii (strain OSU 85-389).